A 157-amino-acid polypeptide reads, in one-letter code: Cyclic pyranopterin monophosphate synthase (157 aa).

Substrate-binding positions include 74-76 (MCH) and 112-113 (ME). Asp127 is an active-site residue.

This sequence belongs to the MoaC family. Homohexamer; trimer of dimers.

The catalysed reaction is (8S)-3',8-cyclo-7,8-dihydroguanosine 5'-triphosphate = cyclic pyranopterin phosphate + diphosphate. Its pathway is cofactor biosynthesis; molybdopterin biosynthesis. Functionally, catalyzes the conversion of (8S)-3',8-cyclo-7,8-dihydroguanosine 5'-triphosphate to cyclic pyranopterin monophosphate (cPMP). The polypeptide is Cyclic pyranopterin monophosphate synthase (Campylobacter jejuni subsp. doylei (strain ATCC BAA-1458 / RM4099 / 269.97)).